Reading from the N-terminus, the 330-residue chain is tRNA uridine(34) hydroxylase (330 aa).

In terms of domain architecture, Rhodanese spans 123 to 217 (SDPEVILVDT…YLEEVKQEES (95 aa)). Catalysis depends on Cys-177, which acts as the Cysteine persulfide intermediate.

It belongs to the TrhO family.

It carries out the reaction uridine(34) in tRNA + AH2 + O2 = 5-hydroxyuridine(34) in tRNA + A + H2O. Its function is as follows. Catalyzes oxygen-dependent 5-hydroxyuridine (ho5U) modification at position 34 in tRNAs. This Shewanella sp. (strain ANA-3) protein is tRNA uridine(34) hydroxylase.